We begin with the raw amino-acid sequence, 966 residues long: LRR receptor-like serine/threonine-protein kinase ERL1 (966 aa).

The signal sequence occupies residues 1–25 (MKEKMQRMVLSLAMVGFMVFGVASA). The Extracellular segment spans residues 26-582 (MNNEGKALMA…PLPKSRVFSR (557 aa)). An LRR 1 repeat occupies 40–63 (FSNLVNMLLDWDDVHNSDLCSWRG). N-linked (GlcNAc...) asparagine glycosylation is found at asparagine 68 and asparagine 77. 20 LRR repeats span residues 75 to 94 (SLNLSSLNLGGEISPAIGDL), 95 to 118 (RNLQSIDLQGNKLAGQIPDEIGNC), 120 to 142 (SLVYLDLSENLLYGDIPFSISKL), 143 to 166 (KQLETLNLKNNQLTGPVPATLTQI), 168 to 190 (NLKRLDLAGNHLTGEISRLLYWN), 192 to 214 (VLQYLGLRGNMLTGTLSSDMCQL), 215 to 238 (TGLWYFDVRGNNLTGTIPESIGNC), 239 to 261 (TSFQILDISYNQITGEIPYNIGF), 262 to 285 (LQVATLSLQGNRLTGRIPEVIGLM), 286 to 311 (QALAVLDLSDNELVGPIPPILGNLSF), 313 to 333 (GKLYLHGNMLTGPIPSELGNM), 334 to 357 (SRLSYLQLNDNKLVGTIPPELGKL), 359 to 381 (QLFELNLANNRLVGPIPSNISSC), 383 to 404 (ALNQFNVHGNLLSGSIPLAFRN), 405 to 429 (LGSLTYLNLSSNNFKGKIPVELGHI), 431 to 453 (NLDKLDLSGNNFSGSIPLTLGDL), 454 to 476 (EHLLILNLSRNHLSGQLPAEFGN), 478 to 500 (RSIQMIDVSFNLLSGVIPTELGQ), 501 to 525 (LQNLNSLILNNNKLHGKIPDQLTNC), and 527 to 550 (TLVNLNVSFNNLSGIVPPMKNFSR). N-linked (GlcNAc...) asparagine glycosylation is found at asparagine 226 and asparagine 237. N-linked (GlcNAc...) asparagine glycans are attached at residues asparagine 308 and asparagine 332. N-linked (GlcNAc...) asparagine glycosylation is present at asparagine 377. Residues asparagine 412, asparagine 441, and asparagine 460 are each glycosylated (N-linked (GlcNAc...) asparagine). Residues asparagine 532, asparagine 537, and asparagine 547 are each glycosylated (N-linked (GlcNAc...) asparagine). The chain crosses the membrane as a helical span at residues 583–603 (GALICIVLGVITLLCMIFLAV). The Cytoplasmic portion of the chain corresponds to 604–966 (YKSMQQKKIL…FREVISKSSI (363 aa)). Threonine 637 and threonine 645 each carry phosphothreonine. One can recognise a Protein kinase domain in the interval 648-921 (LNEKFIIGYG…RVLLSLVPSL (274 aa)). ATP contacts are provided by residues 654 to 662 (IGYGASSTV) and lysine 676. 2 positions are modified to phosphotyrosine: tyrosine 721 and tyrosine 760. Aspartate 773 acts as the Proton acceptor in catalysis. Tyrosine 815 is subject to Phosphotyrosine. Phosphothreonine is present on threonine 823.

It belongs to the protein kinase superfamily. Ser/Thr protein kinase family. In terms of assembly, homodimer and heterodimer with ERECTA and TMM. Interacts with EPF1 and EPF2. Interacts with SERK1, SERK2, SERK3/BAK1 and SERK4 in a EPF1-induced manner. As to expression, mostly expressed in developing organs, including bud clusters, flowers, siliques and young rosettes. Also detected in mature aboveground organs, such as leaves, stems and pedicels, but barely in roots.

It is found in the cell membrane. It carries out the reaction L-seryl-[protein] + ATP = O-phospho-L-seryl-[protein] + ADP + H(+). It catalyses the reaction L-threonyl-[protein] + ATP = O-phospho-L-threonyl-[protein] + ADP + H(+). Its function is as follows. Receptor kinase that regulates inflorescence architecture and organ shape as well as stomatal patterning, including density and clustering, together with ER and ERL2. Redundantly involved with ER in procambial development regulation. Forms a functional ligand-receptor pair with EPF1 (AC Q8S8I4). Forms a constitutive complex with TMM involved in the recognition of the stomatal regulatory peptides EPF1, EPF2 and EPFL9/STOMAGEN. This Arabidopsis thaliana (Mouse-ear cress) protein is LRR receptor-like serine/threonine-protein kinase ERL1.